Consider the following 382-residue polypeptide: MKALHFGAGNIGRGFIGKLLAESDAEVTFADANTQLVDQLNHSQEYHVRVVGDNQHTDVIRHIAAVQANSDDVINQIIKADIITTAVGPQVLAKIAATIARGLQLRFEQGNYAPVNIIACENMVRGTSQLKQAVLAELPAQYHAQLEEYVGFVDSAVDRIVPPAAANDEDPLAVTVESFSEWIVDKNQFRGDIPPVQGMELTDNLIAYVERKLFTLNTGHIVTAYLGKLAGYKTIREAIADEEIQQAVRQAMQQSGEVLVKRYGFDRQLHHAYIEKILTRFANPYLVDEIDRVGRQPLRKLGAEDRLTKPLLGTLEYGLPNDALLKGIAAALHYRNADDPQAVELQGWIEQDGVEAALLRATGLKADEPCVATIVAEYQRMA.

3-14 contributes to the NAD(+) binding site; it reads ALHFGAGNIGRG.

Belongs to the mannitol dehydrogenase family.

It catalyses the reaction D-mannitol 1-phosphate + NAD(+) = beta-D-fructose 6-phosphate + NADH + H(+). In Tolumonas auensis (strain DSM 9187 / NBRC 110442 / TA 4), this protein is Mannitol-1-phosphate 5-dehydrogenase.